Here is an 874-residue protein sequence, read N- to C-terminus: Cyanophycin synthetase (874 aa).

An ATP-grasp domain is found at 224–480 (KTTLAEAGIP…VAAPVIDMLF (257 aa)). 495–501 (GTNGKTT) provides a ligand contact to ATP.

In the C-terminal section; belongs to the MurCDEF family. Homodimer.

It catalyses the reaction [L-4-(L-arginin-2-N-yl)aspartate](n) + L-aspartate + ATP = [L-4-(L-arginin-2-N-yl)aspartate](n)-L-aspartate + ADP + phosphate + H(+). It carries out the reaction [L-4-(L-arginin-2-N-yl)aspartate](n)-L-aspartate + L-arginine + ATP = [L-4-(L-arginin-2-N-yl)aspartate](n+1) + ADP + phosphate + H(+). Catalyzes the ATP-dependent polymerization of arginine and aspartate to multi-L-arginyl-poly-L-aspartic acid (cyanophycin; a water-insoluble reserve polymer). The protein is Cyanophycin synthetase (cphA) of Geminocystis herdmanii (strain PCC 6308) (Synechocystis sp. (strain PCC 6308)).